We begin with the raw amino-acid sequence, 1038 residues long: Activated CDC42 kinase 1 (1038 aa).

Residues 1 to 110 (MQPEEGTGWL…TSPAPGGPAG (110 aa)) form an SAM-like domain region. Residues 90–114 (PPHHSQSTFRKTSPAPGGPAGEGPL) form a disordered region. The Protein kinase domain occupies 126–385 (LRLLEKLGDG…PTFVALRDFL (260 aa)). ATP-binding positions include 132–140 (LGDGSFGVV) and Lys-158. Asp-252 functions as the Proton acceptor in the catalytic mechanism. Tyr-284 carries the post-translational modification Phosphotyrosine; by SRC and autocatalysis. The 61-residue stretch at 388–448 (AQPTDMRALQ…PRNVVTSVAG (61 aa)) folds into the SH3 domain. A CRIB domain is found at 454-466 (ISQPLQNSFIHTG). The tract at residues 497-535 (LSVELSTSRPPQHLGGVKKPTYDPVSEDQDPLSSDFKRL) is disordered. Tyr-518 bears the Phosphotyrosine mark. Residues 623-652 (DWDARPLPPPPAYDDVAQDEDDFEICSINS) form a required for interaction with SRC region. Positions 632–635 (PPAY) are required for interaction with NEDD4. Disordered regions lie at residues 659–702 (VPAG…SSAQ) and 718–840 (LQAP…GPRA). Ser-724 carries the post-translational modification Phosphoserine. Positions 733 to 876 (GDDKPQVPPR…SYLERYQRFL (144 aa)) are EBD domain. 3 stretches are compositionally biased toward pro residues: residues 738 to 749 (QVPPRVPIPPRP), 772 to 783 (PASPPRVPPREP), and 794 to 805 (PLVPPGSSPLPP). Position 827 is a phosphotyrosine (Tyr-827). Omega-N-methylarginine is present on Arg-839. 2 positions are modified to phosphotyrosine: Tyr-859 and Tyr-872. Ser-881 is modified (phosphoserine). The tract at residues 917–957 (LDPKANFSTNNSNPGARPPPPRATARLPQRGCPGDGPEAGR) is disordered. Residues 958 to 996 (PADKIQMAMVHGVTTEECQAALQCHGWSVQRAAQYLKVE) form the UBA domain.

It belongs to the protein kinase superfamily. Tyr protein kinase family. Interacts with NEDD4 (via WW3 domain). NEDD4L and EGF promote association with NEDD4. Homodimer. Interacts with AR, CDC42, WWASL and WWOX. Interacts with CSPG4 (activated). Interacts with MERTK (activated); stimulates autophosphorylation. May interact (phosphorylated) with HSP90AB1; maintains kinase activity. Interacts with NPHP1. Interacts with SNX9 (via SH3 domain). Interacts with SRC (via SH2 and SH3 domain). Interacts with EGFR, and this interaction is dependent on EGF stimulation and kinase activity of EGFR. Interacts (via kinase domain) with AKT1. Part of a collagen stimulated complex involved in cell migration composed of CDC42, CRK, TNK2 and BCAR1/p130cas. Interacts with BCAR1/p130cas via SH3 domains. Forms complexes with GRB2 and numerous receptor tyrosine kinases (RTK) including LTK, AXL or PDGFRL, in which GRB2 promotes RTK recruitment by TNK2. The cofactor is Mg(2+). Post-translationally, autophosphorylation regulates kinase activity. Phosphorylation on Tyr-518 is required for interaction with SRC and is observed during association with clathrin-coated pits. In terms of processing, polyubiquitinated by NEDD4 and NEDD4L. Degradation can be induced by EGF and is lysosome-dependent. As to expression, the Tyr-284 phosphorylated form shows a significant increase in expression in breast cancers during the progressive stages i.e. normal to hyperplasia (ADH), ductal carcinoma in situ (DCIS), invasive ductal carcinoma (IDC) and lymph node metastatic (LNMM) stages. It also shows a significant increase in expression in prostate cancers during the progressive stages.

It is found in the cell membrane. Its subcellular location is the nucleus. It localises to the endosome. The protein resides in the cell junction. The protein localises to the adherens junction. It is found in the cytoplasmic vesicle membrane. Its subcellular location is the cytoplasmic vesicle. It localises to the clathrin-coated vesicle. The protein resides in the membrane. The protein localises to the clathrin-coated pit. It is found in the cytoplasm. Its subcellular location is the perinuclear region. It localises to the cytosol. It carries out the reaction L-tyrosyl-[protein] + ATP = O-phospho-L-tyrosyl-[protein] + ADP + H(+). The catalysed reaction is L-seryl-[protein] + ATP = O-phospho-L-seryl-[protein] + ADP + H(+). It catalyses the reaction L-threonyl-[protein] + ATP = O-phospho-L-threonyl-[protein] + ADP + H(+). Inhibited by AIM-100 (4-amino-5,6-biaryl-furo[2,3-d]pyrimidine), which suppresses activating phosphorylation at Tyr-284. Repressed by dasatinib. In terms of biological role, non-receptor tyrosine-protein and serine/threonine-protein kinase that is implicated in cell spreading and migration, cell survival, cell growth and proliferation. Transduces extracellular signals to cytosolic and nuclear effectors. Phosphorylates AKT1, AR, MCF2, WASL and WWOX. Implicated in trafficking and clathrin-mediated endocytosis through binding to epidermal growth factor receptor (EGFR) and clathrin. Binds to both poly- and mono-ubiquitin and regulates ligand-induced degradation of EGFR, thereby contributing to the accumulation of EGFR at the limiting membrane of early endosomes. Downstream effector of CDC42 which mediates CDC42-dependent cell migration via phosphorylation of BCAR1. May be involved both in adult synaptic function and plasticity and in brain development. Activates AKT1 by phosphorylating it on 'Tyr-176'. Phosphorylates AR on 'Tyr-267' and 'Tyr-363' thereby promoting its recruitment to androgen-responsive enhancers (AREs). Phosphorylates WWOX on 'Tyr-287'. Phosphorylates MCF2, thereby enhancing its activity as a guanine nucleotide exchange factor (GEF) toward Rho family proteins. Contributes to the control of AXL receptor levels. Confers metastatic properties on cancer cells and promotes tumor growth by negatively regulating tumor suppressor such as WWOX and positively regulating pro-survival factors such as AKT1 and AR. Phosphorylates WASP. This chain is Activated CDC42 kinase 1 (TNK2), found in Homo sapiens (Human).